Here is a 355-residue protein sequence, read N- to C-terminus: Erythronate-4-phosphate dehydrogenase (355 aa).

The substrate site is built by serine 45 and threonine 66. Aspartate 146 provides a ligand contact to NAD(+). Residue arginine 206 is part of the active site. Aspartate 229 provides a ligand contact to NAD(+). Glutamate 234 is a catalytic residue. The active-site Proton donor is the histidine 251. An NAD(+)-binding site is contributed by glycine 254. Tyrosine 255 is a binding site for substrate.

It belongs to the D-isomer specific 2-hydroxyacid dehydrogenase family. PdxB subfamily. Homodimer.

The protein localises to the cytoplasm. The catalysed reaction is 4-phospho-D-erythronate + NAD(+) = (R)-3-hydroxy-2-oxo-4-phosphooxybutanoate + NADH + H(+). The protein operates within cofactor biosynthesis; pyridoxine 5'-phosphate biosynthesis; pyridoxine 5'-phosphate from D-erythrose 4-phosphate: step 2/5. Catalyzes the oxidation of erythronate-4-phosphate to 3-hydroxy-2-oxo-4-phosphonooxybutanoate. The chain is Erythronate-4-phosphate dehydrogenase from Acinetobacter baumannii (strain AB307-0294).